The chain runs to 357 residues: CRISPR system Cms protein Csm5 (357 aa).

This sequence belongs to the CRISPR-associated Csm5 family. In terms of assembly, part of the Csm effector complex that includes at least Cas10(1), Csm2(3), Csm3(5), Csm4(1), Csm5(1) and mature crRNA. The Csm complex is elongated and slightly twisted with a maximal length of 215 Angstroms and a diameter of 75-80 Angstroms. It has been modeled to have a central protein filamant of Csm3 subunits along which the dsRNA helix of paired crRNA and target RNA binds. The filament is capped at one end by Cas10 and Csm4 and at the other end by Csm5; ssDNA is thought to bind to the N-terminal HD domain of Cas10. Csm with a precursor crRNA does not include Csm5, while Cas6, the enzyme probably involved in pre-crRNA processing, is found associated with a subset of the Csm complex.

In terms of biological role, CRISPR (clustered regularly interspaced short palindromic repeat) is an adaptive immune system that provides protection against mobile genetic elements (viruses, transposable elements and conjugative plasmids). CRISPR clusters contain spacers, sequences complementary to antecedent mobile elements, and target invading nucleic acids. CRISPR clusters are transcribed and processed into CRISPR RNA (crRNA). The type III-A Csm effector complex binds crRNA and acts as a crRNA-guided RNase, DNase and cyclic oligoadenylate synthase; binding of target RNA cognate to the crRNA is required for all activities. In a heterologous host this Csm effector complex restricts ssRNA phage MS2, suggesting it may target RNA viruses in vivo. Csm functions as a non-specific ssDNase. Base-pairing between crRNA and target RNA to form a ternary Csm complex activates a ssDNase activity; target RNA cleavage suppresses the ssDNase, a temporal control that prevents uncontrolled DNA degradation. Viral RNA transcripts probably tether the Csm complex to the viral genome, recruiting Cas10 ssDNA activity which is able to degrade DNA in the transcription bubble, spatially controlling the DNase activity. Functionally, this subunit might be involved in maturation of a crRNA intermediate to its mature form. This is CRISPR system Cms protein Csm5 from Streptococcus thermophilus.